Reading from the N-terminus, the 182-residue chain is Adenine phosphoribosyltransferase (182 aa).

It belongs to the purine/pyrimidine phosphoribosyltransferase family. Homodimer.

It localises to the cytoplasm. It carries out the reaction AMP + diphosphate = 5-phospho-alpha-D-ribose 1-diphosphate + adenine. The protein operates within purine metabolism; AMP biosynthesis via salvage pathway; AMP from adenine: step 1/1. In terms of biological role, catalyzes a salvage reaction resulting in the formation of AMP, that is energically less costly than de novo synthesis. The chain is Adenine phosphoribosyltransferase from Campylobacter curvus (strain 525.92).